We begin with the raw amino-acid sequence, 852 residues long: MNGHFAAIGNGPTAKQYDHGIQVIDEDKSFNTNLNDYLTETHVAESGFNYHLISVFGSQSTGKSTLLNHLFGTQFSVMSETERRQTTKGIWLSKNKRDSANGSPMADNILVMDVEGTDGRERGEDQDFERKSALFALATSEVLIVNIWEHQVGLYQGANMGLLKTVFEVNLQLFLKDRQSQTRSLLFFVIRDFVGNTPLENLRTTLITDLSKIWSSISKPQGLEDSKIEDYFDFAFSALPHKIYQPEKFLAEVDRLGARFTTGHRSTKDQEFGGGVFLPEYHRRIPADGLSVYAGGVWDQIVNNKDLDLPTQQELLAQFRCDEIAREVLVGFDTVIAPLEEQQVEAIRLGKPAAVLADLGAQGAGAREKCIKAFETQASRYHKGVYTMKRGELESKIDTRLKALYQAQLTAAHKAGVAAFSEAVSGAVKAGQKAGGSYEFAEIVAKQKAKTLQIFKTEAKSLSIPGVAWSNFKPQYKLFEKELDEVSARLRKEEMRRLAIRVERWVRSRLGDAIGLEFNKLGSGRGGSVSPEGGEKPATEKDLWDRVWNAFIGIVKEAETRFAERAKSFEASPEEVEVGLWRLRRKSWVALREKIEEEVMESNILMKLRENFEDKFRYDEDGVPRIWRPTDDIEGIYTKARESTLGLVPLLSRFRLSETYAPPDLPAFIGVQPAGVEPEDEEDLLPIGGIDEEEGKSLEEETTVLGESKRQDLVVRFKKMADGVYVEAKRSAIGGITQVPLYFYVILLILGWNEILMVLRNPFLILLILVMGGGTYIAYSLNLLGPMMQMSNAAFNQAVDIGKDRLRDFLVNNETARQALAVPARQMGADISLDRLDSRGKKAQDISDDDDI.

Over 1-738 (MNGHFAAIGN…KRSAIGGITQ (738 aa)) the chain is Cytoplasmic. The GB1/RHD3-type G domain occupies 47-294 (GFNYHLISVF…IPADGLSVYA (248 aa)). 57–64 (GSQSTGKS) is a binding site for GTP. The stretch at 475–500 (QYKLFEKELDEVSARLRKEEMRRLAI) forms a coiled coil. A helical transmembrane segment spans residues 739–759 (VPLYFYVILLILGWNEILMVL). Topologically, residues 760–762 (RNP) are lumenal. The helical transmembrane segment at 763–783 (FLILLILVMGGGTYIAYSLNL) threads the bilayer. Topologically, residues 784–852 (LGPMMQMSNA…AQDISDDDDI (69 aa)) are cytoplasmic.

Belongs to the TRAFAC class dynamin-like GTPase superfamily. GB1/RHD3 GTPase family. RHD3 subfamily.

Its subcellular location is the endoplasmic reticulum membrane. Functionally, cooperates with the reticulon proteins and tubule-shaping DP1 family proteins to generate and maintain the structure of the tubular endoplasmic reticulum network. Has GTPase activity, which is required for its function in ER organization. The polypeptide is Protein SEY1 (Podospora anserina (strain S / ATCC MYA-4624 / DSM 980 / FGSC 10383) (Pleurage anserina)).